The sequence spans 81 residues: Short neurotoxin 2 (81 aa).

An N-terminal signal peptide occupies residues 1 to 21 (MKTLLLTLVVVTIVCLDLGYT). Intrachain disulfides connect C24/C43, C38/C60, C62/C73, and C74/C79.

This sequence belongs to the three-finger toxin family. Short-chain subfamily. Type I alpha-neurotoxin sub-subfamily. As to expression, expressed by the venom gland.

It localises to the secreted. In terms of biological role, binds to muscle nicotinic acetylcholine receptor (nAChR) and inhibit acetylcholine from binding to the receptor, thereby impairing neuromuscular transmission. This Hydrophis hardwickii (Hardwick's spine-bellied seasnake) protein is Short neurotoxin 2.